A 549-amino-acid polypeptide reads, in one-letter code: Probable protein kinase UbiB (549 aa).

In terms of domain architecture, Protein kinase spans 123-501; sequence DFNETPLASA…QQQAHKSNYL (379 aa). ATP-binding positions include 129–137 and K152; that span reads LASASISQV. Residue D287 is the Proton acceptor of the active site. 2 helical membrane-spanning segments follow: residues 498–518 and 520–540; these read SNYL…LFNQ and ATLW…IIGW.

Belongs to the ABC1 family. UbiB subfamily.

The protein localises to the cell inner membrane. It participates in cofactor biosynthesis; ubiquinone biosynthesis [regulation]. Functionally, is probably a protein kinase regulator of UbiI activity which is involved in aerobic coenzyme Q (ubiquinone) biosynthesis. This is Probable protein kinase UbiB from Shewanella sp. (strain MR-7).